We begin with the raw amino-acid sequence, 612 residues long: FAD-linked oxidoreductase easE (612 aa).

In terms of domain architecture, FAD-binding PCMH-type spans 129 to 313 (HQGRIPLYSA…TRATMRVFPD (185 aa)).

This sequence belongs to the oxygen-dependent FAD-linked oxidoreductase family. The cofactor is FAD.

It functions in the pathway alkaloid biosynthesis; ergot alkaloid biosynthesis. FAD-linked oxidoreductase; part of the gene cluster that mediates the biosynthesis of fungal ergot alkaloid. DmaW catalyzes the first step of ergot alkaloid biosynthesis by condensing dimethylallyl diphosphate (DMAP) and tryptophan to form 4-dimethylallyl-L-tryptophan. The second step is catalyzed by the methyltransferase easF that methylates 4-dimethylallyl-L-tryptophan in the presence of S-adenosyl-L-methionine, resulting in the formation of 4-dimethylallyl-L-abrine. The catalase easC and the FAD-dependent oxidoreductase easE then transform 4-dimethylallyl-L-abrine to chanoclavine-I which is further oxidized by easD in the presence of NAD(+), resulting in the formation of chanoclavine-I aldehyde. Chanoclavine-I aldehyde is the precursor of ergoamides and ergopeptines in Clavicipitaceae, and clavine-type alcaloids such as fumiclavine in Trichocomaceae. However, the metabolites downstream of chanoclavine-I aldehyde in Arthrodermataceae have not been identified yet. In Arthroderma otae (strain ATCC MYA-4605 / CBS 113480) (Microsporum canis), this protein is FAD-linked oxidoreductase easE.